A 178-amino-acid chain; its full sequence is Conodipine-P3 (178 aa).

The signal sequence occupies residues 1-24 (MKLLAPVLWAMAALGVTWLVAVDS). Residue P38 is modified to 4-hydroxyproline. 4-hydroxyproline; partial is present on residues P42 and P49. H54 is an active-site residue. Residues 98–130 (KREVTSHRATSIAHSRLWKTALDQKSFLNRKAR) constitute a propeptide, interchain peptide. Pyrrolidone carboxylic acid is present on Q131. At P137 the chain carries 4-hydroxyproline; partial.

This sequence belongs to the phospholipase A2 family. Group IX subfamily. Heterodimer of an alpha and a beta chain; probably disulfide-linked. The cofactor is Ca(2+). As to expression, expressed by the venom duct.

The protein resides in the secreted. It catalyses the reaction a 1,2-diacyl-sn-glycero-3-phosphocholine + H2O = a 1-acyl-sn-glycero-3-phosphocholine + a fatty acid + H(+). Functionally, catalyzes the calcium-dependent hydrolysis of the 2-acyl groups in 3-sn-phosphoglycerides. The polypeptide is Conodipine-P3 (Conus purpurascens (Purple cone)).